Here is a 351-residue protein sequence, read N- to C-terminus: Dihydroorotate dehydrogenase (quinone) (351 aa).

FMN is bound by residues alanine 67 to lysine 71 and threonine 91. Lysine 71 serves as a coordination point for substrate. Residue asparagine 116 to phenylalanine 120 participates in substrate binding. Positions 145 and 178 each coordinate FMN. Asparagine 178 is a substrate binding site. Residue serine 181 is the Nucleophile of the active site. Asparagine 183 provides a ligand contact to substrate. FMN is bound by residues lysine 214 and threonine 242. Position 243–244 (asparagine 243–threonine 244) interacts with substrate. Residues glycine 262, glycine 291, and tyrosine 312–threonine 313 contribute to the FMN site.

It belongs to the dihydroorotate dehydrogenase family. Type 2 subfamily. In terms of assembly, monomer. It depends on FMN as a cofactor.

Its subcellular location is the cell membrane. It carries out the reaction (S)-dihydroorotate + a quinone = orotate + a quinol. It functions in the pathway pyrimidine metabolism; UMP biosynthesis via de novo pathway; orotate from (S)-dihydroorotate (quinone route): step 1/1. Its function is as follows. Catalyzes the conversion of dihydroorotate to orotate with quinone as electron acceptor. The sequence is that of Dihydroorotate dehydrogenase (quinone) from Nitratiruptor sp. (strain SB155-2).